The sequence spans 612 residues: DNA mismatch repair protein MutL (612 aa).

It belongs to the DNA mismatch repair MutL/HexB family.

Functionally, this protein is involved in the repair of mismatches in DNA. It is required for dam-dependent methyl-directed DNA mismatch repair. May act as a 'molecular matchmaker', a protein that promotes the formation of a stable complex between two or more DNA-binding proteins in an ATP-dependent manner without itself being part of a final effector complex. In Herminiimonas arsenicoxydans, this protein is DNA mismatch repair protein MutL.